The following is a 1703-amino-acid chain: Stress response protein NST1 (1703 aa).

12 disordered regions span residues 1-91 (MAKS…AKDA), 243-288 (DQPL…PLPP), 347-484 (HALR…IWST), 566-724 (VSSG…GLGS), 759-807 (MHRE…EQRM), 843-1292 (LREL…LGAP), 1353-1407 (FSPM…IGPI), 1424-1465 (HTGA…DIID), 1516-1537 (SSFSGNNPTAPGPLSPAFNGGG), 1558-1581 (ASTPGAGSSGSGMAGGAASDPWAR), 1595-1637 (EQPG…HHQL), and 1672-1703 (GAPGSNALHPGAIGSALSPTLPGARHVSGSHE). Positions 7-36 (PRSTPAARAAAVPPPRLAAAAQQQHHQQQP) are enriched in low complexity. A compositionally biased stretch (pro residues) spans 37–48 (PSTPPAPVPPTK). Residues 57–66 (PPRSASPVSN) are compositionally biased toward polar residues. A compositionally biased stretch (basic residues) spans 77–86 (AKKKKKKSKS). The segment covering 253–273 (NTANNAHPTNVNGAYGQYSSS) has biased composition (polar residues). A compositionally biased stretch (pro residues) spans 274-288 (PNPPPTQPPVEPLPP). A compositionally biased stretch (basic residues) spans 365-376 (SKNKKKKKKKKG). The span at 384-393 (HGDDEAHEIE) shows a compositional bias: basic and acidic residues. Residues 396 to 409 (VPPPKPVPNHPPPS) are compositionally biased toward pro residues. Composition is skewed to low complexity over residues 410–419 (TNVSSVARNS) and 453–464 (SSNSGKRSVSSS). Residues 572–581 (IPPPPGPGPF) show a composition bias toward pro residues. The segment covering 614 to 650 (THTHTHAHTHTHTHTHTHTHTHAHQHPHPHPHGRKAS) has biased composition (basic residues). Over residues 657–690 (DGYDDDELDDDAEYDDDDDDADYDDEDEDDDVEL) the composition is skewed to acidic residues. Residues 691–703 (EKERAREDYDKRN) show a composition bias toward basic and acidic residues. Positions 748-1031 (LEMMEQLAER…AKQAAAAASR (284 aa)) form a coiled coil. The span at 771–802 (ASDDEDDVDGPDDVDDEDLDEEDEDEEDEILT) shows a compositional bias: acidic residues. 3 stretches are compositionally biased toward basic and acidic residues: residues 853–866 (EKAREARRMKESQK), 874–896 (QREAKEAERLKKDQERAAAEAEV), and 904–1023 (RDAE…REAK). Low complexity-rich tracts occupy residues 1024–1037 (QAAAAASRGASAAQ) and 1111–1135 (AGGLAAAVAASSVAPAGSSSNAVGS). Positions 1138-1148 (PAPPQGLPPRP) are enriched in pro residues. Over residues 1158-1167 (SSSQTSSVSV) the composition is skewed to low complexity. Positions 1200-1219 (LNAQSNVPMPSAKTPGSSIS) are enriched in polar residues. The span at 1269-1291 (QNSGMFGSNGSMSSSLQSPSLGA) shows a compositional bias: low complexity. Residues 1431-1444 (GRSSSTTSGSGATS) show a composition bias toward low complexity. Gly residues predominate over residues 1598–1619 (GGNGVGAGSNGGTPSGLGGIGG).

Belongs to the NST1 family.

The protein resides in the cytoplasm. Functionally, may act as a negative regulator of salt tolerance. The protein is Stress response protein NST1 (NST1) of Mycosarcoma maydis (Corn smut fungus).